The primary structure comprises 119 residues: Large ribosomal subunit protein bL20 (119 aa).

This sequence belongs to the bacterial ribosomal protein bL20 family.

Its function is as follows. Binds directly to 23S ribosomal RNA and is necessary for the in vitro assembly process of the 50S ribosomal subunit. It is not involved in the protein synthesizing functions of that subunit. This is Large ribosomal subunit protein bL20 from Laribacter hongkongensis (strain HLHK9).